The sequence spans 785 residues: E3 UFM1-protein ligase 1 homolog (785 aa).

The segment at 404–483 (GGNASNQLDD…GGGGSNKKSV (80 aa)) is disordered.

It belongs to the UFL1 family.

E3 UFM1-protein ligase that mediates ufmylation of target proteins. This chain is E3 UFM1-protein ligase 1 homolog, found in Drosophila willistoni (Fruit fly).